A 189-amino-acid chain; its full sequence is Peptidyl-tRNA hydrolase (189 aa).

Tyr16 provides a ligand contact to tRNA. The active-site Proton acceptor is His21. Phe67, Asn69, and Asn115 together coordinate tRNA.

It belongs to the PTH family. Monomer.

It is found in the cytoplasm. The catalysed reaction is an N-acyl-L-alpha-aminoacyl-tRNA + H2O = an N-acyl-L-amino acid + a tRNA + H(+). In terms of biological role, hydrolyzes ribosome-free peptidyl-tRNAs (with 1 or more amino acids incorporated), which drop off the ribosome during protein synthesis, or as a result of ribosome stalling. Functionally, catalyzes the release of premature peptidyl moieties from peptidyl-tRNA molecules trapped in stalled 50S ribosomal subunits, and thus maintains levels of free tRNAs and 50S ribosomes. In Legionella pneumophila (strain Paris), this protein is Peptidyl-tRNA hydrolase.